Reading from the N-terminus, the 20-residue chain is Non-secretory ribonuclease (20 aa).

Histidine 16 acts as the Proton acceptor in catalysis.

This sequence belongs to the pancreatic ribonuclease family. In terms of assembly, interacts with and forms a tight 1:1 complex with RNH1. Dimerization of two such complexes may occur.

It is found in the lysosome. It localises to the cytoplasmic granule. It catalyses the reaction an [RNA] containing cytidine + H2O = an [RNA]-3'-cytidine-3'-phosphate + a 5'-hydroxy-ribonucleotide-3'-[RNA].. The enzyme catalyses an [RNA] containing uridine + H2O = an [RNA]-3'-uridine-3'-phosphate + a 5'-hydroxy-ribonucleotide-3'-[RNA].. This is a non-secretory ribonuclease. It is a pyrimidine specific nuclease with a slight preference for U. Cytotoxin and helminthotoxin. Possesses a wide variety of biological activities. The sequence is that of Non-secretory ribonuclease (RNASE2) from Sus scrofa (Pig).